We begin with the raw amino-acid sequence, 332 residues long: Ribosomal RNA small subunit methyltransferase H (332 aa).

Residues 37-39 (GGY), Asp-55, Phe-82, Asp-103, and Gln-110 each bind S-adenosyl-L-methionine. Positions 281-332 (TKRPVTPSDEETAANPRARSAKLRAGERTAAPAQPEAPLPHWPTLASVMGRR) are disordered.

The protein belongs to the methyltransferase superfamily. RsmH family.

The protein localises to the cytoplasm. The catalysed reaction is cytidine(1402) in 16S rRNA + S-adenosyl-L-methionine = N(4)-methylcytidine(1402) in 16S rRNA + S-adenosyl-L-homocysteine + H(+). In terms of biological role, specifically methylates the N4 position of cytidine in position 1402 (C1402) of 16S rRNA. This is Ribosomal RNA small subunit methyltransferase H from Rhodopseudomonas palustris (strain BisA53).